Reading from the N-terminus, the 353-residue chain is Histidinol-phosphate aminotransferase (353 aa).

Lys-218 carries the N6-(pyridoxal phosphate)lysine modification.

It belongs to the class-II pyridoxal-phosphate-dependent aminotransferase family. Histidinol-phosphate aminotransferase subfamily. As to quaternary structure, homodimer. It depends on pyridoxal 5'-phosphate as a cofactor.

The enzyme catalyses L-histidinol phosphate + 2-oxoglutarate = 3-(imidazol-4-yl)-2-oxopropyl phosphate + L-glutamate. It participates in amino-acid biosynthesis; L-histidine biosynthesis; L-histidine from 5-phospho-alpha-D-ribose 1-diphosphate: step 7/9. This is Histidinol-phosphate aminotransferase from Synechococcus sp. (strain JA-3-3Ab) (Cyanobacteria bacterium Yellowstone A-Prime).